Reading from the N-terminus, the 433-residue chain is uncharacterized protein (433 aa).

The region spanning 1-59 (MGEEYEVEIGPVAHGGHCIARTSEGQVLFVRHALPGERVLARVTEGEEGARYLRADAVE) is the TRAM domain. Positions 72, 80, 83, and 168 each coordinate [4Fe-4S] cluster. 4 residues coordinate S-adenosyl-L-methionine: Gln262, Tyr291, Glu315, and Asp359. Cys386 serves as the catalytic Nucleophile.

Belongs to the class I-like SAM-binding methyltransferase superfamily. RNA M5U methyltransferase family.

This is an uncharacterized protein from Streptomyces avermitilis (strain ATCC 31267 / DSM 46492 / JCM 5070 / NBRC 14893 / NCIMB 12804 / NRRL 8165 / MA-4680).